Consider the following 683-residue polypeptide: Transforming growth factor-beta-induced protein ig-h3 (683 aa).

Residues 1–23 form the signal peptide; it reads MALLGRLLPLALALALGPAATPA. Ser-37 is modified (phosphoserine). The EMI domain maps to 45–99; the sequence is GPNVCAVQKLIGTNKKYFTNCKQWYQRKICGKSTVISYECCPGYEKVPGEKGCPA. Intrachain disulfides connect Cys-49–Cys-85, Cys-74–Cys-339, Cys-84–Cys-97, Cys-214–Cys-317, and Cys-473–Cys-478. Cys-65 carries the post-translational modification S-cysteinyl cysteine. 4 consecutive FAS1 domains span residues 103–236, 240–371, 375–498, and 502–632; these read LSNL…DKVI, TNNI…DELL, SAKT…DRML, and MGTV…SSVL. Residues 642–644 carry the Cell attachment site motif; it reads RGD.

Binds to type I, II, and IV collagens. In terms of processing, gamma-carboxylation is controversial. Gamma-carboxyglutamated; gamma-carboxyglutamate residues are formed by vitamin K dependent carboxylation; this may be required for calcium binding. According to a more recent report, does not contain vitamin K-dependent gamma-carboxyglutamate residues. Post-translationally, the EMI domain contains 2 expected intradomain disulfide bridges (Cys-49-Cys85 and Cys-84-Cys-97) and one unusual interdomain disulfide bridge to the second FAS1 domain (Cys-74-Cys-339). This arrangement violates the predicted disulfide bridge pattern of an EMI domain.

Its subcellular location is the secreted. The protein localises to the extracellular space. It localises to the extracellular matrix. Its function is as follows. Plays a role in cell adhesion. May play a role in cell-collagen interactions. This is Transforming growth factor-beta-induced protein ig-h3 (TGFBI) from Bos taurus (Bovine).